A 434-amino-acid chain; its full sequence is Serine--tRNA ligase (434 aa).

241-243 (TAE) serves as a coordination point for L-serine. Position 272-274 (272-274 (RSE)) interacts with ATP. Glutamate 295 is an L-serine binding site. 359 to 362 (EISS) lines the ATP pocket. Serine 395 lines the L-serine pocket.

The protein belongs to the class-II aminoacyl-tRNA synthetase family. Type-1 seryl-tRNA synthetase subfamily. Homodimer. The tRNA molecule binds across the dimer.

It localises to the cytoplasm. The enzyme catalyses tRNA(Ser) + L-serine + ATP = L-seryl-tRNA(Ser) + AMP + diphosphate + H(+). It carries out the reaction tRNA(Sec) + L-serine + ATP = L-seryl-tRNA(Sec) + AMP + diphosphate + H(+). It participates in aminoacyl-tRNA biosynthesis; selenocysteinyl-tRNA(Sec) biosynthesis; L-seryl-tRNA(Sec) from L-serine and tRNA(Sec): step 1/1. Its function is as follows. Catalyzes the attachment of serine to tRNA(Ser). Is also able to aminoacylate tRNA(Sec) with serine, to form the misacylated tRNA L-seryl-tRNA(Sec), which will be further converted into selenocysteinyl-tRNA(Sec). The sequence is that of Serine--tRNA ligase from Glaesserella parasuis serovar 5 (strain SH0165) (Haemophilus parasuis).